The chain runs to 84 residues: MNSLLKVAVVCLVMLVACSSGRVVLPDDADTEYNSEYALAKRVNCKCEGGHEEGTYWVFGCPKNWYSCKSGYVYGRCCSQQWGK.

The signal sequence occupies residues 1 to 21 (MNSLLKVAVVCLVMLVACSSG). 3 cysteine pairs are disulfide-bonded: Cys-45–Cys-77, Cys-47–Cys-68, and Cys-61–Cys-78.

Expressed in ectodermal gland cells. In adult female tissues, highly transcribed in mesenteries (gametes-producing tissue) and slightly transcribed in tentacles, pharynx and physa.

Has toxic effects on zebrafish larvae. It causes contractile paralysis and twitching of the tail within 20 minutes, followed by death within 30 minutes. Does not show any toxicity when injected into arthropods (cherry shrimps or grass shrimps). This Nematostella vectensis (Starlet sea anemone) protein is N.vectensis toxin 5.